A 119-amino-acid chain; its full sequence is uncharacterized protein (119 aa).

A disulfide bridge links Cys-9 with Cys-12.

The protein belongs to the ArsC family.

This is an uncharacterized protein from Streptomyces viridochromogenes.